The chain runs to 154 residues: MSRRRTPKKRVIAPDALYNSVLVHTIVNHLMKKGKKSLAYMMFYETLSEIKQKTEQDPLEVIQKAVNNVRPLVIVKSRRVSGSTRQVPLSVDYEIGVALAIRWILAACRKRVGKSMISKMTNEFLDASKNIGNAIRKKDEIAKMAQANRAYARF.

It belongs to the universal ribosomal protein uS7 family. Part of the 30S ribosomal subunit.

Its subcellular location is the plastid. The protein localises to the chloroplast. One of the primary rRNA binding proteins, it binds directly to 16S rRNA where it nucleates assembly of the head domain of the 30S subunit. The protein is Small ribosomal subunit protein uS7c (rps7) of Pleurastrum terricola (Filamentous green alga).